A 753-amino-acid chain; its full sequence is Polyribonucleotide nucleotidyltransferase (753 aa).

The Mg(2+) site is built by aspartate 488 and aspartate 494. Positions 555 to 614 (PRLLRTKISPDKIGALIGPGGKNIRGIQETTGAVIEVDDEGTVLVASSNKESAQEAMRQV) constitute a KH domain. The 69-residue stretch at 624–692 (GKIYDGTVSS…EHDRVKLSRR (69 aa)) folds into the S1 motif domain. Over residues 698 to 719 (LGEEDPLAVEGEGGGDSEGGGD) the composition is skewed to acidic residues. The tract at residues 698 to 753 (LGEEDPLAVEGEGGGDSEGGGDGEDRPRRRRGGSGGGGGGGRGRGPRRSGGGRDRD) is disordered. Positions 730–740 (GSGGGGGGGRG) are enriched in gly residues.

It belongs to the polyribonucleotide nucleotidyltransferase family. Requires Mg(2+) as cofactor.

The protein localises to the cytoplasm. The catalysed reaction is RNA(n+1) + phosphate = RNA(n) + a ribonucleoside 5'-diphosphate. Functionally, involved in mRNA degradation. Catalyzes the phosphorolysis of single-stranded polyribonucleotides processively in the 3'- to 5'-direction. In Rhodopirellula baltica (strain DSM 10527 / NCIMB 13988 / SH1), this protein is Polyribonucleotide nucleotidyltransferase.